The sequence spans 114 residues: Large ribosomal subunit protein uL18 (114 aa).

This sequence belongs to the universal ribosomal protein uL18 family. In terms of assembly, part of the 50S ribosomal subunit; part of the 5S rRNA/L5/L18/L25 subcomplex. Contacts the 5S and 23S rRNAs.

This is one of the proteins that bind and probably mediate the attachment of the 5S RNA into the large ribosomal subunit, where it forms part of the central protuberance. In Aster yellows phytoplasma, this protein is Large ribosomal subunit protein uL18.